The chain runs to 560 residues: Choline/ethanolamine transporter FLVCR1 (560 aa).

A disordered region spans residues 1–43 (MARPDDEVGPAVAPGHPLGKGYLPVPKGAPDGEARLVPQNGPE). At 1–92 (MARPDDEVGP…EDVPCPACPP (92 aa)) the chain is on the cytoplasmic side. Residues 93–117 (RTALSPRRFVVLLIFSLYSLVNAFQ) form a helical membrane-spanning segment. Residues 118–135 (WIQYSSISNVFEDFYEVS) lie on the Extracellular side of the membrane. The chain crosses the membrane as a helical span at residues 136-163 (PLHINWLSMVYMVAYVPLIFPATWLLDT). Residues 164 to 165 (RG) are Cytoplasmic-facing. Residues 166 to 185 (LRLTALLGSGLNCLGAWVKC) form a helical membrane-spanning segment. The Extracellular portion of the chain corresponds to 186 to 192 (GSVQRHL). The chain crosses the membrane as a helical span at residues 193–221 (FWVTMLGQILCSVAQVFILGLPSPVASVW). Gln207 provides a ligand contact to ethanolamine. The Cytoplasmic segment spans residues 222–226 (FGPKE). The chain crosses the membrane as a helical span at residues 227-252 (VSTACATAVLGNQLGTAVGFLLPPVL). Residues 253 to 270 (VPALGTQNSTGLLAHTQN) are Extracellular-facing. An N-linked (GlcNAc...) asparagine glycan is attached at Asn270. The helical transmembrane segment at 271 to 300 (NTDLLAHNINTMFYGTAFISTFLFFLTIIA) threads the bilayer. The Cytoplasmic portion of the chain corresponds to 301–336 (FKEKPPLPPSQAQAVLRDSPPEEYSYKSSIWNLCRN). The chain crosses the membrane as a helical span at residues 337-367 (IPFVLLLVSYGIMTGAFYSISTLLNQIILTY). Residues 368-371 (YVGE) are Extracellular-facing. Residues 372–400 (EVNAGRIGLTLVVAGMVGSILCGLWLDYT) form a helical membrane-spanning segment. The Cytoplasmic portion of the chain corresponds to 401–402 (KT). A helical membrane pass occupies residues 403 to 425 (YKQTTLIVYVLSFIGMLIFTFTL). Over 426–428 (NLG) the chain is Extracellular. A helical membrane pass occupies residues 429-458 (YIIVVFFTGGILGFFMTGYLPLGFEFAVEI). At 459-466 (TYPESEGM) the chain is on the cytoplasmic side. The helical transmembrane segment at 467-492 (SSGLLNTAAQILGIFFTLAQGKITTD) threads the bilayer. Gln476 is a binding site for ethanolamine. Position 476 (Gln476) interacts with choline. Residues 493–495 (YNS) are Extracellular-facing. Residues 496 to 518 (PEAGNIFLCAWMFVGIILTALIK) traverse the membrane as a helical segment. The Cytoplasmic segment spans residues 519-560 (SDLRRHNINTGLTNIDVKAVPVDSRVDPKPKVMVSIQSESSL). Residue Ser542 is modified to Phosphoserine.

Belongs to the major facilitator superfamily. Feline leukemia virus subgroup C receptor (TC 2.A.1.28.1) family.

The protein localises to the cell membrane. The protein resides in the mitochondrion membrane. It carries out the reaction choline(out) = choline(in). The enzyme catalyses ethanolamine(in) = ethanolamine(out). The catalysed reaction is heme b(in) = heme b(out). Its function is as follows. Uniporter that mediates the transport of extracellular choline and ethanolamine into cells, thereby playing a key role in phospholipid biosynthesis. Choline and ethanolamine are the precursors of phosphatidylcholine and phosphatidylethanolamine, respectively, the two most abundant phospholipids. Transport is not coupled with proton transport and is exclusively driven by the choline (or ethanolamine) gradient across the plasma membrane. Also acts as a heme b transporter that mediates heme efflux from the cytoplasm to the extracellular compartment. In terms of biological role, uniporter that mediates the transport of extracellular choline and ethanolamine into cells. Choline and ethanolamine are the precursors of phosphatidylcholine and phosphatidylethanolamine, respectively, the two most abundant phospholipids. Transport is not coupled with proton transport and is exclusively driven by the choline (or ethanolamine) gradient across the plasma membrane. Also acts as a heme b transporter that mediates heme efflux from the cytoplasm to the extracellular compartment. Heme export depends on the presence of HPX and is required to maintain intracellular free heme balance, protecting cells from heme toxicity. Heme export provides protection from heme or ferrous iron toxicities in liver, brain, sensory neurons and during erythropoiesis, a process in which heme synthesis intensifies. Possibly export coproporphyrin and protoporphyrin IX, which are both intermediate products in the heme biosynthetic pathway. Does not export bilirubin. The molecular mechanism of heme transport, whether electrogenic, electroneutral or coupled to other ions, remains to be elucidated. Heme transporter that promotes heme efflux from the mitochondrion to the cytoplasm. Essential for erythroid differentiation. In Mus musculus (Mouse), this protein is Choline/ethanolamine transporter FLVCR1 (Flvcr1).